The following is a 313-amino-acid chain: tRNA dimethylallyltransferase (313 aa).

10–17 (GPTAVGKS) serves as a coordination point for ATP. 12 to 17 (TAVGKS) contacts substrate. The interval 35-38 (DSTQ) is interaction with substrate tRNA.

It belongs to the IPP transferase family. Monomer. Mg(2+) is required as a cofactor.

The catalysed reaction is adenosine(37) in tRNA + dimethylallyl diphosphate = N(6)-dimethylallyladenosine(37) in tRNA + diphosphate. Functionally, catalyzes the transfer of a dimethylallyl group onto the adenine at position 37 in tRNAs that read codons beginning with uridine, leading to the formation of N6-(dimethylallyl)adenosine (i(6)A). In Oceanobacillus iheyensis (strain DSM 14371 / CIP 107618 / JCM 11309 / KCTC 3954 / HTE831), this protein is tRNA dimethylallyltransferase.